The primary structure comprises 961 residues: Phosphofurin acidic cluster sorting protein 1 (961 aa).

Gly residues predominate over residues 1–19 (MAERGGAGGGPGGSGGGSS). Disordered stretches follow at residues 1–70 (MAER…SSST) and 76–95 (VAVA…RTPA). An N-acetylalanine modification is found at Ala-2. Over residues 20–34 (QRGSGVAQSPQQQPQ) the composition is skewed to low complexity. A Phosphoserine modification is found at Ser-28. The span at 35–46 (QQPPQPQQPTPP) shows a compositional bias: pro residues. Phosphothreonine is present on Thr-44. A compositionally biased stretch (low complexity) spans 51–70 (ATSSSSSTSAAAASSSSSST). Residue Tyr-249 is modified to Phosphotyrosine. Basic and acidic residues predominate over residues 260–271 (GIKSKLSDRSPD). Disordered stretches follow at residues 260–297 (GIKS…LHGQ) and 375–426 (NPSD…GKDT). The span at 274–291 (NYSEEEEESFSSEQEGSD) shows a compositional bias: acidic residues. A coiled-coil region spans residues 351–375 (HVSREQIREVEEDLDELYDSLEMYN). Residues Ser-377 and Ser-379 each carry the phosphoserine modification. Residues 404–426 (MSQSSSQTEIGSLNSKGSLGKDT) show a composition bias toward polar residues. Residues Ser-428 and Ser-493 each carry the phosphoserine modification. Disordered stretches follow at residues 475-540 (EKVK…HSTQ) and 758-802 (SPST…SMSS). Thr-502 is subject to Phosphothreonine. 5 positions are modified to phosphoserine: Ser-517, Ser-526, Ser-527, Ser-529, and Ser-532. Positions 768-802 (SPVVSLTVPSTSPPSSSGLSRDATATPPSSPSMSS) are enriched in low complexity.

This sequence belongs to the PACS family. In terms of assembly, associates with AP-1 and AP-3 but not with AP-2 complexes. Interacts with FURIN. Forms a ternary complex with FURIN and AP-1. Interacts with PKD2 (via acidic region). Interacts with SORL1. Interacts with WDR37.

It localises to the golgi apparatus. It is found in the trans-Golgi network. In terms of biological role, coat protein that is involved in the localization of trans-Golgi network (TGN) membrane proteins that contain acidic cluster sorting motifs. Controls the endosome-to-Golgi trafficking of furin and mannose-6-phosphate receptor by connecting the acidic-cluster-containing cytoplasmic domain of these molecules with the adapter-protein complex-1 (AP-1) of endosomal clathrin-coated membrane pits. Required for normal ER Ca2+ handling in lymphocytes. Together with WDR37, it plays an essential role in lymphocyte development, quiescence and survival. Required for stabilizing peripheral lymphocyte populations. This Mus musculus (Mouse) protein is Phosphofurin acidic cluster sorting protein 1 (Pacs1).